We begin with the raw amino-acid sequence, 928 residues long: Periplasmic nitrate reductase (928 aa).

Residues 1-33 (MAFSRREFLKSAAAASAASAVGMSVPSQLLAQA) constitute a signal peptide (tat-type signal). A 4Fe-4S Mo/W bis-MGD-type domain is found at 40-96 (WRWDKSVCRFCGTGCGIMVATKNDQIVAVKGDPAAPVNRGLNCIKGYFNAKIMYGAD). Cysteine 47, cysteine 50, cysteine 54, and cysteine 82 together coordinate [4Fe-4S] cluster. Mo-bis(molybdopterin guanine dinucleotide) contacts are provided by residues lysine 84, glutamine 152, asparagine 177, cysteine 181, 214-221 (WGANMAEM), 265-267 (QTD), methionine 422, glutamine 426, asparagine 532, 557-558 (SD), lysine 580, aspartate 607, and 818-827 (TGRVLEHWHS). Tryptophan 894 is a binding site for substrate. Residues asparagine 902 and lysine 919 each coordinate Mo-bis(molybdopterin guanine dinucleotide).

It belongs to the prokaryotic molybdopterin-containing oxidoreductase family. NasA/NapA/NarB subfamily. As to quaternary structure, component of the periplasmic nitrate reductase NapAB complex composed of NapA and NapB. [4Fe-4S] cluster serves as cofactor. It depends on Mo-bis(molybdopterin guanine dinucleotide) as a cofactor. Predicted to be exported by the Tat system. The position of the signal peptide cleavage has not been experimentally proven.

It localises to the periplasm. It catalyses the reaction 2 Fe(II)-[cytochrome] + nitrate + 2 H(+) = 2 Fe(III)-[cytochrome] + nitrite + H2O. In terms of biological role, catalytic subunit of the periplasmic nitrate reductase complex NapAB. Receives electrons from NapB and catalyzes the reduction of nitrate to nitrite. The protein is Periplasmic nitrate reductase of Wolinella succinogenes (strain ATCC 29543 / DSM 1740 / CCUG 13145 / JCM 31913 / LMG 7466 / NCTC 11488 / FDC 602W) (Vibrio succinogenes).